We begin with the raw amino-acid sequence, 616 residues long: Chaperone protein DnaK (616 aa).

Residue T174 is modified to Phosphothreonine; by autocatalysis. The segment at 576–616 (QASAPGAGPEGASGGFGGENKKDDNVVDADYTVIDDDKKKT) is disordered. Gly residues predominate over residues 583 to 593 (GPEGASGGFGG).

Belongs to the heat shock protein 70 family.

In terms of biological role, acts as a chaperone. The polypeptide is Chaperone protein DnaK (Heliobacterium modesticaldum (strain ATCC 51547 / Ice1)).